The sequence spans 326 residues: MWTCLCQLCFYLLSTLAVAALSIAALVLYKTKPYPNIKRHKDEETFLDPHTIKTVTFPSLEDSPSLELSVIVPAYNEEQRLPSMLDECLAFLEQKSAGTPNFTYEVIVVSDGSQDATVSVALGYSKKHGAEKVRVLELIENRGKGGAVRMGMLSARGRNLLFADADGATKFPDYDKLEVALKQLAPEWRDDGIAIGSRAHLENDAIATRSFFRTILMHGFHFLVWLFAVRSIRDTQCGFKLFTRTTARKLFTSLHVERWAFDVELLYLAENLKLPMSEVAVRWTEIDGSKLTPFWSWLQMGRDLFMIWVRYLVGAWRIASIQKKEK.

The Lumenal segment spans residues 1–7; that stretch reads MWTCLCQ. The helical transmembrane segment at 8 to 28 threads the bilayer; the sequence is LCFYLLSTLAVAALSIAALVL. Residues 29–326 are Cytoplasmic-facing; sequence YKTKPYPNIK…RIASIQKKEK (298 aa).

It belongs to the glycosyltransferase 2 family.

It localises to the endoplasmic reticulum membrane. It carries out the reaction a di-trans,poly-cis-dolichyl phosphate + UDP-alpha-D-glucose = a di-trans,poly-cis-dolichyl beta-D-glucosyl phosphate + UDP. Its pathway is protein modification; protein glycosylation. Its function is as follows. Required for normal production of N-glycosylated proteins in the endoplasmic reticulum (ER). Required for embryonic segmentation, dorsal-ventral patterning and gastrulation. Required for chitin orientation and shaping of the apical and lateral plasma membranes of epidermal cells during cuticle differentiation. Also required for correctly shaping apical membrane topology of the epithelia of other organs such as the midgut and the hindgut. The protein is Dolichyl-phosphate beta-glucosyltransferase (wol) of Drosophila melanogaster (Fruit fly).